The following is a 297-amino-acid chain: HTH-type transcriptional regulator ArgP (297 aa).

The 57-residue stretch at Pro4–Thr60 folds into the HTH lysR-type domain. The segment at residues Phe21–Lys40 is a DNA-binding region (H-T-H motif).

Belongs to the LysR transcriptional regulatory family. In terms of assembly, homodimer.

Functionally, controls the transcription of genes involved in arginine and lysine metabolism. The protein is HTH-type transcriptional regulator ArgP of Salmonella choleraesuis (strain SC-B67).